We begin with the raw amino-acid sequence, 185 residues long: Ribosome-recycling factor (185 aa).

Belongs to the RRF family.

It is found in the cytoplasm. Responsible for the release of ribosomes from messenger RNA at the termination of protein biosynthesis. May increase the efficiency of translation by recycling ribosomes from one round of translation to another. This chain is Ribosome-recycling factor, found in Rhodospirillum centenum (strain ATCC 51521 / SW).